Consider the following 309-residue polypeptide: Zinc transporter ZIP2 (309 aa).

Over 1–8 the chain is Extracellular; that stretch reads MEQLLGIK. Residues 9–29 traverse the membrane as a helical segment; the sequence is LGCLFALLALTLGCGLTPICF. Residues 30–46 are Cytoplasmic-facing; it reads KWFQIDAARGHHRLVLR. Residues 47–67 traverse the membrane as a helical segment; it reads LLGCISAGVFLGAGFMHMTAE. Over 68–103 the chain is Extracellular; sequence ALEEIESQIQKFMVQNRSASERNSSGDADSAHMEYP. A helical membrane pass occupies residues 104–124; it reads YGELIISLGFFFVFFLESLAL. Over 125–164 the chain is Cytoplasmic; sequence QCCPGAAGGSTVQDEEWGGAHIFELHSHGHLPSPSKGPLR. Residues 165–185 form a helical membrane-spanning segment; sequence ALVLLLSLSFHSVFEGLAVGL. 2 residues coordinate Zn(2+): His-175 and Glu-179. Over 186–189 the chain is Extracellular; it reads QPTV. The helical transmembrane segment at 190–210 threads the bilayer; it reads AATVQLCLAVLAHKGLVVFGV. Residue His-202 coordinates Zn(2+). Residues 211–224 are Cytoplasmic-facing; the sequence is GMRLVHLGTSSRWA. Residues 225 to 245 form a helical membrane-spanning segment; that stretch reads VFSILLLALMSPLGLAVGLAV. At 246–258 the chain is on the extracellular side; that stretch reads TGGDSEGGRGLAQ. A helical membrane pass occupies residues 259–279; the sequence is AVLEGVAAGTFLYVTFLEILP. Glu-276 contributes to the Zn(2+) binding site. Topologically, residues 280–288 are cytoplasmic; that stretch reads RELASPEAP. Residues 289–309 traverse the membrane as a helical segment; it reads LAKWSCVAAGFAFMAFIALWA.

This sequence belongs to the ZIP transporter (TC 2.A.5) family. Expressed only in prostate and uterine epithelial cells.

The protein localises to the cell membrane. The enzyme catalyses Zn(2+)(in) = Zn(2+)(out). The catalysed reaction is Cd(2+)(in) = Cd(2+)(out). With respect to regulation, activity is increased at acidic pH (6.5). Inhibited in the presence of high extracellular K(+). In terms of biological role, transporter for the divalent cation Zn(2+). Mediates the influx of Zn(2+) into cells from extracellular space. The Zn(2+) uniporter activity is independent of H(+)-driving force, but is modulated by extracellular pH and membrane potential. Also transports other divalent cations Zn(2+), Cd2(+), Cu2(+), Co2(+) in the order of decreasing affinity, respectively. In the skin, aids in the differentiation of keratinocytes in the epidermis. This chain is Zinc transporter ZIP2, found in Homo sapiens (Human).